Consider the following 406-residue polypeptide: Imidazolonepropionase (406 aa).

H74 and H76 together coordinate Fe(3+). Zn(2+) is bound by residues H74 and H76. R83, Y146, and H179 together coordinate 4-imidazolone-5-propanoate. N-formimidoyl-L-glutamate is bound at residue Y146. Residue H240 coordinates Fe(3+). Zn(2+) is bound at residue H240. E243 lines the 4-imidazolone-5-propanoate pocket. Residue D314 coordinates Fe(3+). Residue D314 participates in Zn(2+) binding. N-formimidoyl-L-glutamate contacts are provided by N316 and G318. S319 is a binding site for 4-imidazolone-5-propanoate.

The protein belongs to the metallo-dependent hydrolases superfamily. HutI family. The cofactor is Zn(2+). Fe(3+) serves as cofactor.

The protein resides in the cytoplasm. The catalysed reaction is 4-imidazolone-5-propanoate + H2O = N-formimidoyl-L-glutamate. Its pathway is amino-acid degradation; L-histidine degradation into L-glutamate; N-formimidoyl-L-glutamate from L-histidine: step 3/3. In terms of biological role, catalyzes the hydrolytic cleavage of the carbon-nitrogen bond in imidazolone-5-propanoate to yield N-formimidoyl-L-glutamate. It is the third step in the universal histidine degradation pathway. This is Imidazolonepropionase from Kosmotoga olearia (strain ATCC BAA-1733 / DSM 21960 / TBF 19.5.1).